Here is a 326-residue protein sequence, read N- to C-terminus: 4-hydroxy-3-methylbut-2-enyl diphosphate reductase 1 (326 aa).

Cys27 contributes to the [4Fe-4S] cluster binding site. (2E)-4-hydroxy-3-methylbut-2-enyl diphosphate is bound by residues His56 and His89. Residues His56 and His89 each coordinate dimethylallyl diphosphate. Positions 56 and 89 each coordinate isopentenyl diphosphate. [4Fe-4S] cluster is bound at residue Cys111. His139 lines the (2E)-4-hydroxy-3-methylbut-2-enyl diphosphate pocket. His139 provides a ligand contact to dimethylallyl diphosphate. Isopentenyl diphosphate is bound at residue His139. Glu141 functions as the Proton donor in the catalytic mechanism. Thr179 is a (2E)-4-hydroxy-3-methylbut-2-enyl diphosphate binding site. [4Fe-4S] cluster is bound at residue Cys209. (2E)-4-hydroxy-3-methylbut-2-enyl diphosphate-binding residues include Ser237, Ser238, Asn239, and Ser281. Positions 237, 238, 239, and 281 each coordinate dimethylallyl diphosphate. Ser237, Ser238, Asn239, and Ser281 together coordinate isopentenyl diphosphate.

This sequence belongs to the IspH family. [4Fe-4S] cluster is required as a cofactor.

It catalyses the reaction isopentenyl diphosphate + 2 oxidized [2Fe-2S]-[ferredoxin] + H2O = (2E)-4-hydroxy-3-methylbut-2-enyl diphosphate + 2 reduced [2Fe-2S]-[ferredoxin] + 2 H(+). The catalysed reaction is dimethylallyl diphosphate + 2 oxidized [2Fe-2S]-[ferredoxin] + H2O = (2E)-4-hydroxy-3-methylbut-2-enyl diphosphate + 2 reduced [2Fe-2S]-[ferredoxin] + 2 H(+). It participates in isoprenoid biosynthesis; dimethylallyl diphosphate biosynthesis; dimethylallyl diphosphate from (2E)-4-hydroxy-3-methylbutenyl diphosphate: step 1/1. Its pathway is isoprenoid biosynthesis; isopentenyl diphosphate biosynthesis via DXP pathway; isopentenyl diphosphate from 1-deoxy-D-xylulose 5-phosphate: step 6/6. In terms of biological role, catalyzes the conversion of 1-hydroxy-2-methyl-2-(E)-butenyl 4-diphosphate (HMBPP) into a mixture of isopentenyl diphosphate (IPP) and dimethylallyl diphosphate (DMAPP). Acts in the terminal step of the DOXP/MEP pathway for isoprenoid precursor biosynthesis. The protein is 4-hydroxy-3-methylbut-2-enyl diphosphate reductase 1 of Burkholderia pseudomallei (strain K96243).